Here is a 63-residue protein sequence, read N- to C-terminus: Ferredoxin (63 aa).

Residues 3–31 enclose the 4Fe-4S ferredoxin-type domain; it reads WKVSVDVDTCIGDAICASLCPDVFEMGDD. [4Fe-4S] cluster is bound by residues C12, D15, and C18. A disulfide bridge connects residues C22 and C45. C53 contributes to the [4Fe-4S] cluster binding site.

[4Fe-4S] cluster is required as a cofactor. The cofactor is [3Fe-4S] cluster.

In terms of biological role, ferredoxins are iron-sulfur proteins that transfer electrons in a wide variety of metabolic reactions. The protein is Ferredoxin (fdxA) of Thermococcus kodakarensis (strain ATCC BAA-918 / JCM 12380 / KOD1) (Pyrococcus kodakaraensis (strain KOD1)).